The primary structure comprises 513 residues: Histidine ammonia-lyase (513 aa).

Residues 142–144 (ASG) constitute a cross-link (5-imidazolinone (Ala-Gly)). S143 bears the 2,3-didehydroalanine (Ser) mark.

The protein belongs to the PAL/histidase family. Contains an active site 4-methylidene-imidazol-5-one (MIO), which is formed autocatalytically by cyclization and dehydration of residues Ala-Ser-Gly.

Its subcellular location is the cytoplasm. The catalysed reaction is L-histidine = trans-urocanate + NH4(+). The protein operates within amino-acid degradation; L-histidine degradation into L-glutamate; N-formimidoyl-L-glutamate from L-histidine: step 1/3. The polypeptide is Histidine ammonia-lyase (Methylobacterium sp. (strain 4-46)).